We begin with the raw amino-acid sequence, 330 residues long: Putative acetyltransferase ORF330 (330 aa).

A run of 10 helical transmembrane segments spans residues 29-49 (GFASLSVAFYHLWTLQILPLS), 50-70 (IFRPGWLGVPLFLELSIFLLL), 90-110 (IYPLYYLSATAVFLVELYYFH), 118-138 (LFLHYVFLSSVLAPFSFSYVF), 163-183 (FLLAVGLILSSFIYGTFIVTL), 190-210 (LLYFMPPFWLSAYGWGIIAYI), 225-245 (ISFLFLIYVMYLLAPTDNEFL), 252-272 (VVVYNMVLVVFMLIILNPPKV), 273-293 (LSKVSVFLGEISYGIYVWHLL), and 297-317 (LLGVVGILLGVAVAFATEFPL).

Its subcellular location is the host membrane. In Acidianus convivator (ATV), this protein is Putative acetyltransferase ORF330.